A 440-amino-acid chain; its full sequence is Trigger factor (440 aa).

A PPIase FKBP-type domain is found at 161-257 (GDYVKLAYEG…VLEVRERVLP (97 aa)).

Belongs to the FKBP-type PPIase family. Tig subfamily.

It localises to the cytoplasm. It catalyses the reaction [protein]-peptidylproline (omega=180) = [protein]-peptidylproline (omega=0). In terms of biological role, involved in protein export. Acts as a chaperone by maintaining the newly synthesized protein in an open conformation. Functions as a peptidyl-prolyl cis-trans isomerase. The polypeptide is Trigger factor (Opitutus terrae (strain DSM 11246 / JCM 15787 / PB90-1)).